The following is a 113-amino-acid chain: Cell division topological specificity factor (113 aa).

Belongs to the MinE family.

Functionally, prevents the cell division inhibition by proteins MinC and MinD at internal division sites while permitting inhibition at polar sites. This ensures cell division at the proper site by restricting the formation of a division septum at the midpoint of the long axis of the cell. This chain is Cell division topological specificity factor, found in Methylobacterium radiotolerans (strain ATCC 27329 / DSM 1819 / JCM 2831 / NBRC 15690 / NCIMB 10815 / 0-1).